A 216-amino-acid chain; its full sequence is MRFIISLLFVFTLIFNLAFSHIGIDVSSGTNESGFECFKQKKYSRAIIRCYESIGSIDTNCKPSIENAKKAGIETIDVYLFPCYDCGNPENQVTTTSHYLKDYLKDLDFLWLDIEGPGQYWSGSYDNNKKFIQGLLDSAKTAGFKHVGIYTSESQWPGIVGSWDGGKDYPIWYANYDGAENFNDFSPFNGWTKPHMKQYAGNINECGLGIDKNYWE.

Residues 1 to 20 (MRFIISLLFVFTLIFNLAFS) form the signal peptide. Residues 21 to 216 (HIGIDVSSGT…GLGIDKNYWE (196 aa)) enclose the Ch-type lysozyme domain. Asp25 is an active-site residue. N-linked (GlcNAc...) asparagine glycosylation occurs at Asn31. Residues Asp113 and Glu115 contribute to the active site.

The protein belongs to the glycosyl hydrolase 25 family.

It is found in the secreted. It carries out the reaction Hydrolysis of (1-&gt;4)-beta-linkages between N-acetylmuramic acid and N-acetyl-D-glucosamine residues in a peptidoglycan and between N-acetyl-D-glucosamine residues in chitodextrins.. This Dictyostelium discoideum (Social amoeba) protein is Probable GH family 25 lysozyme 5.